We begin with the raw amino-acid sequence, 809 residues long: Lon protease (809 aa).

A Lon N-terminal domain is found at 42 to 242; sequence LVIYPLGGRP…KVLTLLKKEL (201 aa). 395-402 is an ATP binding site; the sequence is GPPGVGKT. The region spanning 629 to 809 is the Lon proteolytic domain; that stretch reads LTGVGIVTGL…YAEVAKLVFG (181 aa). Active-site residues include Ser716 and Lys759.

This sequence belongs to the peptidase S16 family. Homohexamer. Organized in a ring with a central cavity.

It localises to the cytoplasm. It catalyses the reaction Hydrolysis of proteins in presence of ATP.. In terms of biological role, ATP-dependent serine protease that mediates the selective degradation of mutant and abnormal proteins as well as certain short-lived regulatory proteins. Required for cellular homeostasis and for survival from DNA damage and developmental changes induced by stress. Degrades polypeptides processively to yield small peptide fragments that are 5 to 10 amino acids long. Binds to DNA in a double-stranded, site-specific manner. The protein is Lon protease of Magnetococcus marinus (strain ATCC BAA-1437 / JCM 17883 / MC-1).